The following is an 868-amino-acid chain: Protein translocase subunit SecA (868 aa).

ATP-binding positions include Q85, 103-107 (GEGKT), and D508.

The protein belongs to the SecA family. In terms of assembly, monomer and homodimer. Part of the essential Sec protein translocation apparatus which comprises SecA, SecYEG and auxiliary proteins SecDF. Other proteins may also be involved.

Its subcellular location is the cell membrane. It localises to the cytoplasm. It carries out the reaction ATP + H2O + cellular proteinSide 1 = ADP + phosphate + cellular proteinSide 2.. Functionally, part of the Sec protein translocase complex. Interacts with the SecYEG preprotein conducting channel. Has a central role in coupling the hydrolysis of ATP to the transfer of proteins into and across the cell membrane, serving as an ATP-driven molecular motor driving the stepwise translocation of polypeptide chains across the membrane. This Deinococcus radiodurans (strain ATCC 13939 / DSM 20539 / JCM 16871 / CCUG 27074 / LMG 4051 / NBRC 15346 / NCIMB 9279 / VKM B-1422 / R1) protein is Protein translocase subunit SecA.